Consider the following 322-residue polypeptide: MNTPTQSFRAKAAIFSLLLLSCMQCHAQLSATFYDNTCPNALNTIRTSVRQAISSERRMAASLIRLHFHDCFVQGCDASILLDETPSIESEKTALPNLGSARGFGIIEDAKREVEKICPGVVSCADILTVAARDASAAVGGPSWTVKLGRRDSTTASKTLAETDLPGPFDPLNRLISSFASKGLSTRDMVALSGAHTIGQAQCFLFRDRIYSNGTDIDAGFASTRRRQCPQEGENGNLAPLDLVTPNQFDNNYFKNLIQKKGLLQSDQVLFNGGSTDNIVSEYSNSARAFSSDFAAAMIKMGDISPLSGQNGIIRKVCGSVN.

An N-terminal signal peptide occupies residues 1–27; it reads MNTPTQSFRAKAAIFSLLLLSCMQCHA. Glutamine 28 carries the post-translational modification Pyrrolidone carboxylic acid. 4 disulfide bridges follow: cysteine 38–cysteine 118, cysteine 71–cysteine 76, cysteine 124–cysteine 318, and cysteine 203–cysteine 229. The active-site Proton acceptor is the histidine 69. 5 residues coordinate Ca(2+): aspartate 70, valine 73, glycine 75, aspartate 77, and serine 79. Residue proline 166 participates in substrate binding. Heme b is bound at residue histidine 196. Residue threonine 197 participates in Ca(2+) binding. A glycan (N-linked (GlcNAc...) asparagine) is linked at asparagine 213. Aspartate 242, threonine 245, and aspartate 250 together coordinate Ca(2+).

It belongs to the peroxidase family. Classical plant (class III) peroxidase subfamily. Ca(2+) serves as cofactor. Heme b is required as a cofactor. As to expression, mesophyll protoplasts and to a much lesser extent, roots and germinating seeds.

The protein localises to the secreted. It catalyses the reaction 2 a phenolic donor + H2O2 = 2 a phenolic radical donor + 2 H2O. Functionally, removal of H(2)O(2), oxidation of toxic reductants, biosynthesis and degradation of lignin, suberization, auxin catabolism, response to environmental stresses such as wounding, pathogen attack and oxidative stress. These functions might be dependent on each isozyme/isoform in each plant tissue. Plays an integral role in secondary cell wall biosynthesis by the polymerization of cinnamyl alcohols into lignin and by forming rigid cross-links between cellulose, pectin, hydroxy-proline-rich glycoproteins, and lignin. The protein is Lignin-forming anionic peroxidase of Nicotiana sylvestris (Wood tobacco).